We begin with the raw amino-acid sequence, 529 residues long: Bifunctional purine biosynthesis protein PurH (529 aa).

The 148-residue stretch at 1–148 folds into the MGS-like domain; the sequence is MQQRRPVRRA…KNHRDVAIVV (148 aa). Lys287 carries the post-translational modification N6-acetyllysine.

It belongs to the PurH family.

It carries out the reaction (6R)-10-formyltetrahydrofolate + 5-amino-1-(5-phospho-beta-D-ribosyl)imidazole-4-carboxamide = 5-formamido-1-(5-phospho-D-ribosyl)imidazole-4-carboxamide + (6S)-5,6,7,8-tetrahydrofolate. It catalyses the reaction IMP + H2O = 5-formamido-1-(5-phospho-D-ribosyl)imidazole-4-carboxamide. It participates in purine metabolism; IMP biosynthesis via de novo pathway; 5-formamido-1-(5-phospho-D-ribosyl)imidazole-4-carboxamide from 5-amino-1-(5-phospho-D-ribosyl)imidazole-4-carboxamide (10-formyl THF route): step 1/1. The protein operates within purine metabolism; IMP biosynthesis via de novo pathway; IMP from 5-formamido-1-(5-phospho-D-ribosyl)imidazole-4-carboxamide: step 1/1. This chain is Bifunctional purine biosynthesis protein PurH, found in Escherichia coli O6:K15:H31 (strain 536 / UPEC).